The following is a 148-amino-acid chain: ATP synthase epsilon chain (148 aa).

It belongs to the ATPase epsilon chain family. As to quaternary structure, F-type ATPases have 2 components, CF(1) - the catalytic core - and CF(0) - the membrane proton channel. CF(1) has five subunits: alpha(3), beta(3), gamma(1), delta(1), epsilon(1). CF(0) has three main subunits: a, b and c.

It is found in the cell membrane. Its function is as follows. Produces ATP from ADP in the presence of a proton gradient across the membrane. This chain is ATP synthase epsilon chain, found in Streptococcus thermophilus (strain ATCC BAA-491 / LMD-9).